Here is a 272-residue protein sequence, read N- to C-terminus: 2-succinyl-6-hydroxy-2,4-cyclohexadiene-1-carboxylate synthase (272 aa).

It belongs to the AB hydrolase superfamily. MenH family. Monomer.

The enzyme catalyses 5-enolpyruvoyl-6-hydroxy-2-succinyl-cyclohex-3-ene-1-carboxylate = (1R,6R)-6-hydroxy-2-succinyl-cyclohexa-2,4-diene-1-carboxylate + pyruvate. The protein operates within quinol/quinone metabolism; 1,4-dihydroxy-2-naphthoate biosynthesis; 1,4-dihydroxy-2-naphthoate from chorismate: step 3/7. It functions in the pathway quinol/quinone metabolism; menaquinone biosynthesis. Catalyzes a proton abstraction reaction that results in 2,5-elimination of pyruvate from 2-succinyl-5-enolpyruvyl-6-hydroxy-3-cyclohexene-1-carboxylate (SEPHCHC) and the formation of 2-succinyl-6-hydroxy-2,4-cyclohexadiene-1-carboxylate (SHCHC). This chain is 2-succinyl-6-hydroxy-2,4-cyclohexadiene-1-carboxylate synthase, found in Yersinia pestis bv. Antiqua (strain Nepal516).